Consider the following 501-residue polypeptide: Major capsid protein L1 (501 aa).

It belongs to the papillomaviridae L1 protein family. As to quaternary structure, self-assembles into homopentamers. The capsid has an icosahedral symmetry and consists of 72 capsomers, with each capsomer being a pentamer of L1. Interacts with the minor capsid protein L2; this interaction is necessary for viral genome encapsidation. Interacts with protein E2; this interaction enhances E2-dependent replication and transcription activation.

It is found in the virion. Its subcellular location is the host nucleus. In terms of biological role, forms an icosahedral capsid with a T=7 symmetry and a 50 nm diameter. The capsid is composed of 72 pentamers linked to each other by disulfide bonds and associated with L2 proteins. Binds to heparan sulfate proteoglycans on cell surface of basal layer keratinocytes to provide initial virion attachment. This binding mediates a conformational change in the virus capsid that facilitates efficient infection. The virion enters the host cell via endocytosis. During virus trafficking, L1 protein dissociates from the viral DNA and the genomic DNA is released to the host nucleus. The virion assembly takes place within the cell nucleus. Encapsulates the genomic DNA together with protein L2. In Cervus elaphus (Red deer), this protein is Major capsid protein L1.